The primary structure comprises 371 residues: Histidinol-phosphate aminotransferase (371 aa).

Residue Lys221 is modified to N6-(pyridoxal phosphate)lysine.

Belongs to the class-II pyridoxal-phosphate-dependent aminotransferase family. Histidinol-phosphate aminotransferase subfamily. In terms of assembly, homodimer. Pyridoxal 5'-phosphate serves as cofactor.

The catalysed reaction is L-histidinol phosphate + 2-oxoglutarate = 3-(imidazol-4-yl)-2-oxopropyl phosphate + L-glutamate. Its pathway is amino-acid biosynthesis; L-histidine biosynthesis; L-histidine from 5-phospho-alpha-D-ribose 1-diphosphate: step 7/9. The sequence is that of Histidinol-phosphate aminotransferase from Pseudoalteromonas atlantica (strain T6c / ATCC BAA-1087).